Reading from the N-terminus, the 260-residue chain is Acyl-coenzyme A diphosphatase FITM2 (260 aa).

The Cytoplasmic segment spans residues 1–23; it reads MERLENCAQMFQRKFLNEAFRRH. The chain crosses the membrane as a helical span at residues 24 to 44; it reads CPVLLACIALGGSLLKELSPL. Topologically, residues 45–57 are lumenal; it reads PDSYWNNKRNVLN. Residues 58–78 traverse the membrane as a helical segment; sequence VYFVKFCWGWTLWLLLPFITL. The Cytoplasmic portion of the chain corresponds to 79-93; that stretch reads TNYKLTGSITKVLRR. Residues 94–114 traverse the membrane as a helical segment; that stretch reads LSSLLVGTLFWYLCTNLFLYI. Over 115–144 the chain is Lumenal; it reads EHITGSCYESEALLDSIEHQDRKECRLHGG. Residues 145 to 165 form a helical membrane-spanning segment; it reads FWHGFDISGHCFLLSYCILII. H154 is an active-site residue. Residues 166–189 are Cytoplasmic-facing; that stretch reads LEETSVIRSIQFERHWHRMAINAQ. Transmembrane regions (helical) follow at residues 190–210 and 211–231; these read FTAL…TAVY and FHNI…WYIT. H212 is a catalytic residue. The Cytoplasmic segment spans residues 232-260; the sequence is YRWWYLQPISPGLPPASASHSEKEPVYKN.

Belongs to the FIT family. FIT2 subfamily.

It localises to the endoplasmic reticulum membrane. It catalyses the reaction an acyl-CoA + H2O = an acyl-4'-phosphopantetheine + adenosine 3',5'-bisphosphate + 2 H(+). Its function is as follows. Fatty acyl-coenzyme A (CoA) diphosphatase that hydrolyzes fatty acyl-CoA to yield acyl-4'-phosphopantetheine and adenosine 3',5'-bisphosphate. Preferentially hydrolyzes unsaturated long-chain acyl-CoA substrates in the endoplasmic reticulum (ER) lumen. This catalytic activity is required for maintaining ER structure and for lipid droplets (LDs) biogenesis, which are lipid storage organelles involved in maintaining lipid and energy homeostasis. May directly bind to diacylglycerol (DAGs) and triacylglycerol, which is also important for LD biogenesis. May support directional budding of nacent LDs from the ER into the cytosol by reducing DAG levels at sites of LD formation. May play a role in the regulation of cell morphology, ER morphology and cytoskeletal organization. The sequence is that of Acyl-coenzyme A diphosphatase FITM2 from Xenopus laevis (African clawed frog).